The sequence spans 40 residues: Alpha-conotoxin-like Qc1.4b (40 aa).

A propeptide spanning residues 1–19 (SDGRNTAANDKASDLMALR) is cleaved from the precursor. 2 disulfide bridges follow: Cys22–Cys28 and Cys23–Cys36. Residues 24–26 (PNP) are lacks the Ser-Xaa-Pro motif that is crucial for potent interaction with nAChR. Cys36 is modified (cysteine amide). Residues 37 to 40 (GGGR) constitute a propeptide that is removed on maturation.

Belongs to the conotoxin A superfamily. In terms of tissue distribution, expressed by the venom duct.

It localises to the secreted. Its function is as follows. Alpha-conotoxins act on postsynaptic membranes, they bind to the nicotinic acetylcholine receptors (nAChR) and thus inhibit them. Has possibly a distinct nAChR binding mode from other alpha-conotoxins, due to a different three residue motif (lacks the Ser-Xaa-Pro motif). The protein is Alpha-conotoxin-like Qc1.4b of Conus quercinus (Oak cone).